We begin with the raw amino-acid sequence, 118 residues long: NLIQFGNMIQCANKGSRPSLNYADYGCYCGWGGSGTPVDELDRCCQVHDNCYEQAGKKGCFPKLTLYSWKCTGNVPTCNSKTGCKSFVCACDAAAAKCFAKAPYKKENYNIDTKKRCK.

7 cysteine pairs are disulfide-bonded: Cys-11-Cys-71, Cys-27-Cys-117, Cys-29-Cys-45, Cys-44-Cys-98, Cys-51-Cys-91, Cys-60-Cys-84, and Cys-78-Cys-89. Residues Tyr-28, Gly-30, and Gly-32 each coordinate Ca(2+). His-48 is an active-site residue. A Ca(2+)-binding site is contributed by Asp-49. Asp-92 is a catalytic residue.

It belongs to the phospholipase A2 family. Group I subfamily. D49 sub-subfamily. Ca(2+) serves as cofactor. Expressed by the venom gland.

Its subcellular location is the secreted. The catalysed reaction is a 1,2-diacyl-sn-glycero-3-phosphocholine + H2O = a 1-acyl-sn-glycero-3-phosphocholine + a fatty acid + H(+). PLA2 catalyzes the calcium-dependent hydrolysis of the 2-acyl groups in 3-sn-phosphoglycerides. The chain is Basic phospholipase A2 PA-12A from Pseudechis australis (Mulga snake).